Reading from the N-terminus, the 188-residue chain is MATYTTSDFKPGLKFMQDGEPCVIVENEFVKPGKGQAFTRTRIRKLISGKVLDVNFKSGTSVEAADVMDLNLTYSYKDDAFWYFMHPETFEQYSADAKAIGDAEKWLLDQADCIVTLWNGAPISVTPPNFVELEIIDTDPGLKGDTAGTGGKPATLSTGAVVKVPLFVQIGEVIKVDTRSGEYVSRVK.

Lysine 34 bears the N6-(3,6-diaminohexanoyl)-5-hydroxylysine mark.

Belongs to the elongation factor P family. Post-translationally, may be beta-lysylated on the epsilon-amino group of Lys-34 by the combined action of EpmA and EpmB, and then hydroxylated on the C5 position of the same residue by EpmC (if this protein is present). Lysylation is critical for the stimulatory effect of EF-P on peptide-bond formation. The lysylation moiety may extend toward the peptidyltransferase center and stabilize the terminal 3-CCA end of the tRNA. Hydroxylation of the C5 position on Lys-34 may allow additional potential stabilizing hydrogen-bond interactions with the P-tRNA.

Its subcellular location is the cytoplasm. The protein operates within protein biosynthesis; polypeptide chain elongation. Involved in peptide bond synthesis. Alleviates ribosome stalling that occurs when 3 or more consecutive Pro residues or the sequence PPG is present in a protein, possibly by augmenting the peptidyl transferase activity of the ribosome. Modification of Lys-34 is required for alleviation. This chain is Elongation factor P, found in Pasteurella multocida (strain Pm70).